Consider the following 118-residue polypeptide: Large ribosomal subunit protein bL20 (118 aa).

It belongs to the bacterial ribosomal protein bL20 family.

Functionally, binds directly to 23S ribosomal RNA and is necessary for the in vitro assembly process of the 50S ribosomal subunit. It is not involved in the protein synthesizing functions of that subunit. This Parvibaculum lavamentivorans (strain DS-1 / DSM 13023 / NCIMB 13966) protein is Large ribosomal subunit protein bL20.